Reading from the N-terminus, the 361-residue chain is Nuclear pore complex protein NUP43 (361 aa).

Residues 51–73 (IQSLDPNPRGNHNTNPLIESLSS) form a disordered region. WD repeat units follow at residues 132–173 (FHVG…YRKV), 177–215 (NGLV…EAVS), and 225–265 (KTSA…QPIV).

As to quaternary structure, part of the nuclear pore complex (NPC). The NPC has an eight-fold symmetrical structure comprising a central transport channel and two rings, the cytoplasmic and nuclear rings, to which eight filaments are attached. The cytoplasmic filaments have loose ends, while the nuclear filaments are joined in a distal ring, forming a nuclear basket. NPCs are highly dynamic in configuration and composition, and can be devided in 3 subcomplexes, the NUP62 subcomplex, the NUP107-160 subcomplex and the NUP93 subcomplex, containing approximately 30 different nucleoporin proteins.

The protein localises to the nucleus envelope. It is found in the nucleus. Its subcellular location is the nuclear pore complex. This chain is Nuclear pore complex protein NUP43, found in Arabidopsis thaliana (Mouse-ear cress).